A 132-amino-acid chain; its full sequence is MSTHDPISDLITRIRNAQMRAKSKVSTPGSKMRANVLEVLKNEGYIRGYASVDHASGRSELEIELKYFDGEPVIREIERVSKPGRRVYASVKNLPRVNNGLGISVLSTPKGIMADHEARDANVGGEVLFTVF.

It belongs to the universal ribosomal protein uS8 family. As to quaternary structure, part of the 30S ribosomal subunit. Contacts proteins S5 and S12.

One of the primary rRNA binding proteins, it binds directly to 16S rRNA central domain where it helps coordinate assembly of the platform of the 30S subunit. This Rhodopseudomonas palustris (strain BisB18) protein is Small ribosomal subunit protein uS8.